Consider the following 251-residue polypeptide: Plant UBX domain-containing protein 1 (251 aa).

N-acetylmethionine is present on Met-1. The region spanning 104-180 (SKLTKAVIRV…GFVPGAIVYF (77 aa)) is the UBX domain. The segment at 212–251 (AVEPVESSSEPATVDSSAVPVEHERKSTEKKTTKPKWFKM) is disordered. Residues 217–227 (ESSSEPATVDS) are compositionally biased toward polar residues. Over residues 232–243 (VEHERKSTEKKT) the composition is skewed to basic and acidic residues.

As to quaternary structure, interacts with CDC48A (non-hexameric) via its UBX-containing C-terminal domain.

Its subcellular location is the cytoplasm. Its function is as follows. Regulates CDC48A by inhibiting its ATPase activity and by promoting the disassembly of the active hexamer. The sequence is that of Plant UBX domain-containing protein 1 from Arabidopsis thaliana (Mouse-ear cress).